The sequence spans 388 residues: Peptide chain release factor subunit 1 (388 aa).

The protein belongs to the eukaryotic release factor 1 family. As to quaternary structure, heterodimer of two subunits, one of which binds GTP.

The protein localises to the cytoplasm. Directs the termination of nascent peptide synthesis (translation) in response to the termination codons UAA, UAG and UGA. The protein is Peptide chain release factor subunit 1 (prf1) of Pyrobaculum aerophilum (strain ATCC 51768 / DSM 7523 / JCM 9630 / CIP 104966 / NBRC 100827 / IM2).